The chain runs to 508 residues: Alpha-amylase (508 aa).

Residues 1 to 19 form the signal peptide; the sequence is MLSLIIAACCVTVALAGTF. C46 and C102 are disulfide-bonded. Residues N116, R173, and D182 each contribute to the Ca(2+) site. A disulfide bridge connects residues C156 and C175. R210 lines the chloride pocket. The active-site Nucleophile is the D212. H216 provides a ligand contact to Ca(2+). E248 functions as the Proton donor in the catalytic mechanism. 2 residues coordinate chloride: N311 and R349. 2 disulfide bridges follow: C383-C389 and C455-C467.

The protein belongs to the glycosyl hydrolase 13 family. Monomer. Requires Ca(2+) as cofactor. The cofactor is chloride.

It carries out the reaction Endohydrolysis of (1-&gt;4)-alpha-D-glucosidic linkages in polysaccharides containing three or more (1-&gt;4)-alpha-linked D-glucose units.. The sequence is that of Alpha-amylase from Pecten maximus (King scallop).